Here is a 244-residue protein sequence, read N- to C-terminus: 1-(5-phosphoribosyl)-5-[(5-phosphoribosylamino)methylideneamino] imidazole-4-carboxamide isomerase (244 aa).

Asp8 (proton acceptor) is an active-site residue. The active-site Proton donor is Asp131.

The protein belongs to the HisA/HisF family.

The protein localises to the cytoplasm. It carries out the reaction 1-(5-phospho-beta-D-ribosyl)-5-[(5-phospho-beta-D-ribosylamino)methylideneamino]imidazole-4-carboxamide = 5-[(5-phospho-1-deoxy-D-ribulos-1-ylimino)methylamino]-1-(5-phospho-beta-D-ribosyl)imidazole-4-carboxamide. The protein operates within amino-acid biosynthesis; L-histidine biosynthesis; L-histidine from 5-phospho-alpha-D-ribose 1-diphosphate: step 4/9. The protein is 1-(5-phosphoribosyl)-5-[(5-phosphoribosylamino)methylideneamino] imidazole-4-carboxamide isomerase of Thermomicrobium roseum (strain ATCC 27502 / DSM 5159 / P-2).